The sequence spans 176 residues: Ribosome rescue factor SmrB (176 aa).

Positions 93–168 (LDLHGYRQSE…GDAALLVLID (76 aa)) constitute a Smr domain.

This sequence belongs to the SmrB family. In terms of assembly, associates with collided ribosomes, but not with correctly translating polysomes.

Acts as a ribosome collision sensor. Detects stalled/collided disomes (pairs of ribosomes where the leading ribosome is stalled and a second ribosome has collided with it) and endonucleolytically cleaves mRNA at the 5' boundary of the stalled ribosome. Stalled/collided disomes form a new interface (primarily via the 30S subunits) that binds SmrB. Cleaved mRNA becomes available for tmRNA ligation, leading to ribosomal subunit dissociation and rescue of stalled ribosomes. The polypeptide is Ribosome rescue factor SmrB (Shewanella sp. (strain W3-18-1)).